The following is a 630-amino-acid chain: Chaperone protein HtpG (630 aa).

The a; substrate-binding stretch occupies residues 1-341; the sequence is MTQNATSETL…SADLPLNVSR (341 aa). Residues 342-558 are b; the sequence is EILQESRDVR…QNDLSPHLLR (217 aa). The tract at residues 559–630 is c; sequence MLKAAGQEVP…KRLNALLLKV (72 aa).

This sequence belongs to the heat shock protein 90 family. As to quaternary structure, homodimer.

The protein resides in the cytoplasm. In terms of biological role, molecular chaperone. Has ATPase activity. The polypeptide is Chaperone protein HtpG (Bordetella avium (strain 197N)).